The primary structure comprises 148 residues: Hut operon positive regulatory protein (148 aa).

This sequence belongs to the HutP family. Homohexamer.

Antiterminator that binds to cis-acting regulatory sequences on the mRNA in the presence of histidine, thereby suppressing transcription termination and activating the hut operon for histidine utilization. In Bacillus velezensis (strain DSM 23117 / BGSC 10A6 / LMG 26770 / FZB42) (Bacillus amyloliquefaciens subsp. plantarum), this protein is Hut operon positive regulatory protein.